The following is a 434-amino-acid chain: Arrestin domain-containing protein 1 (434 aa).

Residues 295–345 (PGPGSSPGLLSPVVPSAPPQEEAEAVASGPHFSDPVSLSTKSHSQQQPLST) are disordered. A compositionally biased stretch (polar residues) spans 330 to 342 (VSLSTKSHSQQQP). Short sequence motifs (PPxY motif) lie at residues 401–404 (PPEY) and 414–417 (PPSY).

Belongs to the arrestin family. As to quaternary structure, interacts (via PPxY motifs) with ITCH (via WW domains); the interaction is direct and participates in the recruitment of the ubiquitin-protein ligase ITCH to the NOTCH1 receptor. Interacts with ARRB1 and ARRB2; the interaction is direct. Interacts with TSG101; may recruit TSG101 to the plasma membrane. Interacts (via PPxY motifs) with WWP2 (via WW domains); ubiquitinates ARRDC1. Interacts with SLC11A2; controls the incorporation of SLC11A2 into extracellular vesicles through an ubiquitination-dependent mechanism. Interacts with WWP1 (via WW domains). Interacts with NEDD4 (via WW domains). Interacts with PDCD6IP. Post-translationally, ubiquitinated. Ubiquitination by WWP2; promotes localization to extracellular microvesicles. Ubiquitinated by WWP1.

It localises to the cell membrane. Functions as an adapter recruiting ubiquitin-protein ligases to their specific substrates. Through an ubiquitination-dependent mechanism plays for instance a role in the incorporation of SLC11A2 into extracellular vesicles. More generally, plays a role in the extracellular transport of proteins between cells through the release in the extracellular space of microvesicles. By participating in the ITCH-mediated ubiquitination and subsequent degradation of NOTCH1, negatively regulates the NOTCH signaling pathway. The polypeptide is Arrestin domain-containing protein 1 (Rattus norvegicus (Rat)).